We begin with the raw amino-acid sequence, 401 residues long: Probable 2,3-bisphosphoglycerate-independent phosphoglycerate mutase (401 aa).

Belongs to the BPG-independent phosphoglycerate mutase family. A-PGAM subfamily.

The enzyme catalyses (2R)-2-phosphoglycerate = (2R)-3-phosphoglycerate. Its pathway is carbohydrate degradation; glycolysis; pyruvate from D-glyceraldehyde 3-phosphate: step 3/5. In terms of biological role, catalyzes the interconversion of 2-phosphoglycerate and 3-phosphoglycerate. The polypeptide is Probable 2,3-bisphosphoglycerate-independent phosphoglycerate mutase (Thermotoga sp. (strain RQ2)).